The primary structure comprises 157 residues: uncharacterized protein (157 aa).

This is an uncharacterized protein from Schizosaccharomyces pombe (strain 972 / ATCC 24843) (Fission yeast).